A 301-amino-acid polypeptide reads, in one-letter code: Homoserine kinase (301 aa).

89–99 (KPGSGLGSSSA) serves as a coordination point for ATP.

The protein belongs to the GHMP kinase family. Homoserine kinase subfamily.

The protein resides in the cytoplasm. The enzyme catalyses L-homoserine + ATP = O-phospho-L-homoserine + ADP + H(+). It functions in the pathway amino-acid biosynthesis; L-threonine biosynthesis; L-threonine from L-aspartate: step 4/5. Its function is as follows. Catalyzes the ATP-dependent phosphorylation of L-homoserine to L-homoserine phosphate. The protein is Homoserine kinase of Methanococcus maripaludis (strain C5 / ATCC BAA-1333).